A 108-amino-acid chain; its full sequence is Small ribosomal subunit protein uS10 (108 aa).

The protein belongs to the universal ribosomal protein uS10 family. As to quaternary structure, part of the 30S ribosomal subunit.

Its function is as follows. Involved in the binding of tRNA to the ribosomes. This Rhodopirellula baltica (strain DSM 10527 / NCIMB 13988 / SH1) protein is Small ribosomal subunit protein uS10.